The sequence spans 160 residues: Lipoprotein signal peptidase (160 aa).

The next 4 membrane-spanning stretches (helical) occupy residues Trp7 to Val27, Leu39 to Phe59, Gly62 to Trp82, and Gly96 to Val116. Active-site residues include Asp117 and Asp133. Residues Phe126 to Ala146 traverse the membrane as a helical segment.

This sequence belongs to the peptidase A8 family.

The protein resides in the cell inner membrane. The enzyme catalyses Release of signal peptides from bacterial membrane prolipoproteins. Hydrolyzes -Xaa-Yaa-Zaa-|-(S,diacylglyceryl)Cys-, in which Xaa is hydrophobic (preferably Leu), and Yaa (Ala or Ser) and Zaa (Gly or Ala) have small, neutral side chains.. It participates in protein modification; lipoprotein biosynthesis (signal peptide cleavage). This protein specifically catalyzes the removal of signal peptides from prolipoproteins. In Gloeothece citriformis (strain PCC 7424) (Cyanothece sp. (strain PCC 7424)), this protein is Lipoprotein signal peptidase.